We begin with the raw amino-acid sequence, 676 residues long: Mediator of RNA polymerase II transcription subunit 17 (676 aa).

2 disordered regions span residues 27–68 (IGSK…QFSN) and 117–176 (IEND…TQDT). Over residues 29-40 (SKSTSPHSNSTS) the composition is skewed to low complexity. 2 stretches are compositionally biased toward basic and acidic residues: residues 47-56 (HNTENEEVDN) and 120-134 (DNGK…KAED). A compositionally biased stretch (acidic residues) spans 135–145 (GIDTMDIDQND). A compositionally biased stretch (polar residues) spans 146-160 (NSEANTNDIGYNEWS).

This sequence belongs to the Mediator complex subunit 17 family. In terms of assembly, component of the Mediator complex.

Its subcellular location is the nucleus. Its function is as follows. Component of the Mediator complex, a coactivator involved in the regulated transcription of nearly all RNA polymerase II-dependent genes. Mediator functions as a bridge to convey information from gene-specific regulatory proteins to the basal RNA polymerase II transcription machinery. Mediator is recruited to promoters by direct interactions with regulatory proteins and serves as a scaffold for the assembly of a functional preinitiation complex with RNA polymerase II and the general transcription factors. The protein is Mediator of RNA polymerase II transcription subunit 17 (SRB4) of Candida glabrata (strain ATCC 2001 / BCRC 20586 / JCM 3761 / NBRC 0622 / NRRL Y-65 / CBS 138) (Yeast).